Consider the following 378-residue polypeptide: P2X receptor A (378 aa).

Over M1 to G27 the chain is Cytoplasmic. The helical transmembrane segment at I28–I48 threads the bilayer. Over K49–H307 the chain is Lumenal. The tract at residues R290 to I303 is pore-forming motif. A helical membrane pass occupies residues F308–V328. The Cytoplasmic portion of the chain corresponds to V329–L378.

The protein belongs to the P2X receptor family.

The protein localises to the contractile vacuole membrane. Its function is as follows. P2X receptors are ATP-gated ion channels that play a role in intracellular calcium signaling. Not required for the purinergic response to extracellular nucleotides. Inward currents evoked by intracellular ATP and ATP analogs. Exclusively selective for ATP over other nucleotides. Insensitive to P2 receptor antagonists PPADS, suramin and 2',3'-O-(2,4,6-trinitrophenyl)-ATP but inhibited by nanomolar concentrations of copper and sodium ion. More permeable to ammonium than either sodium or potassium ions and less permeable to choline. It has been reported that p2xA is not essential for osmoregulation, however this information is in contradiction with another source which indicates that p2xA is required for osmoregulation. Found to be permeable to chloride ions. Inhibited by copper and sodium ions. This Dictyostelium discoideum (Social amoeba) protein is P2X receptor A (p2xA).